Reading from the N-terminus, the 343-residue chain is 7-epi-alpha-eudesmol synthase ((2E,6E)-farnesyl diphosphate cyclizing) (343 aa).

Residues Asp-80 and Asp-84 each coordinate Mg(2+). The DDXXD motif signature appears at 80-84; the sequence is DDQFD. Arg-177 is a binding site for substrate. Residues Asn-223 and Ser-227 each coordinate Mg(2+). Arg-230 provides a ligand contact to substrate. Glu-231 is a Mg(2+) binding site. 317 to 318 provides a ligand contact to substrate; it reads RY.

This sequence belongs to the terpene synthase family. Requires Mg(2+) as cofactor.

It catalyses the reaction (2E,6E)-farnesyl diphosphate + H2O = 7-epi-alpha-eudesmol + diphosphate. It participates in secondary metabolite biosynthesis; terpenoid biosynthesis. Functionally, catalyzes the conversion of (2E,6E)-farnesyl diphosphate (FPP) to yield the bicyclic sesquiterpenol 7-epi-alpha-eudesmol via a 1,10-cyclization, which requires the abstraction of the pyrophosphate from FPP to yield the (E,E)-germacradienyl cation. The only accepted substrate is (2E,6E)-farnesyl diphosphate (FPP). The chain is 7-epi-alpha-eudesmol synthase ((2E,6E)-farnesyl diphosphate cyclizing) from Streptomyces viridochromogenes (strain DSM 40736 / JCM 4977 / BCRC 1201 / Tue 494).